The primary structure comprises 540 residues: Malolactic enzyme (540 aa).

The active-site Proton donor is tyrosine 90. Lysine 163 serves as the catalytic Proton acceptor. Substrate is bound at residue lysine 163. Mn(2+)-binding residues include glutamate 234, aspartate 235, and aspartate 258. NAD(+) is bound by residues 291-294, asparagine 403, and asparagine 448; that span reads GGSA. Residue asparagine 448 coordinates substrate.

The protein belongs to the malic enzymes family. As to quaternary structure, homodimer. The cofactor is Mn(2+). It depends on NAD(+) as a cofactor.

It catalyses the reaction (S)-malate + H(+) = (S)-lactate + CO2. Involved in the malolactic fermentation (MLF) of wine, which results in a natural decrease in acidity and favorable changes in wine flavors. Catalyzes the decarboxylation of L-malate to L-lactate. The sequence is that of Malolactic enzyme from Lactococcus lactis subsp. lactis (strain IL1403) (Streptococcus lactis).